The sequence spans 295 residues: MNYMQDNDKLYRYLFQDRAVRGEWVRLNQTFIDTLNTHHYPNVVRNLLGEMMVATNLLTATLKFNGDITVQIQGDGPLRLALVNGNHRQQIRALARIDGEIRDDMSLHQLIGKGVLVITIAPQEGERYQGIIALDKPTVTECLEEYFQRSEQLQTQLLIRVGEYEGKPVAAGMLLQIMPDGSGSPDDFDHLATLTATVKDEEIFGLPAEELLYRLYHEETVELYEPQAIQFHCGCSQERSGSALLLINDDEIDEILEEHNGSIDMQCECCGTHYFFNKEAIEKLKKSGEEPVTTH.

2 disulfide bridges follow: Cys-233/Cys-235 and Cys-267/Cys-270.

The protein belongs to the HSP33 family. Post-translationally, under oxidizing conditions two disulfide bonds are formed involving the reactive cysteines. Under reducing conditions zinc is bound to the reactive cysteines and the protein is inactive.

The protein localises to the cytoplasm. In terms of biological role, redox regulated molecular chaperone. Protects both thermally unfolding and oxidatively damaged proteins from irreversible aggregation. Plays an important role in the bacterial defense system toward oxidative stress. The protein is 33 kDa chaperonin of Mannheimia succiniciproducens (strain KCTC 0769BP / MBEL55E).